The primary structure comprises 147 residues: Hemoglobin subunit gamma (147 aa).

Positions 3–147 (HFTAEEKAAI…VATALAHKYH (145 aa)) constitute a Globin domain. Residues His64 and His93 each contribute to the heme b site.

Belongs to the globin family. In terms of assembly, heterotetramer of two alpha chains and two gamma chains. Red blood cells.

Functionally, this protein functions as an embryonic globin, but the gene structure and chromosomal location resemble more closely the human gamma chain gene, which codes for a fetal globin. The chain is Hemoglobin subunit gamma (HBG) from Oryctolagus cuniculus (Rabbit).